The primary structure comprises 417 residues: NADP-specific glutamate dehydrogenase A1 (417 aa).

Lys105 is an active-site residue.

This sequence belongs to the Glu/Leu/Phe/Val dehydrogenases family. As to quaternary structure, homohexamer.

The enzyme catalyses L-glutamate + NADP(+) + H2O = 2-oxoglutarate + NH4(+) + NADPH + H(+). This is NADP-specific glutamate dehydrogenase A1 (gdhA1) from Halobacterium salinarum (Halobacterium halobium).